The chain runs to 219 residues: GPI-anchored hemophore PGA7 (219 aa).

Residues 1–13 (MHFIFYLILLVSA) form the signal peptide. The CFEM domain maps to 17-126 (GNFGTYPKVP…SMLSTAAGDA (110 aa)). Intrachain disulfides connect Cys-45/Cys-85, Cys-49/Cys-80, Cys-59/Cys-66, and Cys-68/Cys-101. Asp-63 is a heme binding site. The disordered stretch occupies residues 151-194 (VVSETGSASETGSSESAQSTTTGSSSTGSSSTDSSSSSSSSPSS). Residues 153–194 (SETGSASETGSSESAQSTTTGSSSTGSSSTDSSSSSSSSPSS) are compositionally biased toward low complexity. Ser-194 carries the GPI-anchor amidated serine lipid modification. A propeptide spans 195–219 (SANFAVLQTGGIGSVILGFMMYLLV) (removed in mature form).

Belongs to the RBT5 family. Interacts with RBT5. In terms of processing, the GPI-anchor is attached to the protein in the endoplasmic reticulum and serves to target the protein to the cell surface. There, the glucosamine-inositol phospholipid moiety is cleaved off and the GPI-modified mannoprotein is covalently attached via its lipidless GPI glycan remnant to the 1,6-beta-glucan of the outer cell wall layer.

The protein resides in the secreted. It is found in the cell wall. It localises to the cell membrane. GPI-linked hyphal surface heme-binding protein involved in heme-iron utilization. Heme transfer occurs between PGA7, RBT5 and CSA2 supporting a model in which the 3 CFEM proteins cooperate in a heme-acquisition system and form a cross-cell wall heme-transfer cascade. The ability to acquire iron from host tissues is a major virulence factor of pathogenic microorganisms. Required for biofilm formation. The protein is GPI-anchored hemophore PGA7 of Candida albicans (strain SC5314 / ATCC MYA-2876) (Yeast).